Consider the following 197-residue polypeptide: Imidazoleglycerol-phosphate dehydratase (197 aa).

This sequence belongs to the imidazoleglycerol-phosphate dehydratase family.

It is found in the cytoplasm. The catalysed reaction is D-erythro-1-(imidazol-4-yl)glycerol 3-phosphate = 3-(imidazol-4-yl)-2-oxopropyl phosphate + H2O. It functions in the pathway amino-acid biosynthesis; L-histidine biosynthesis; L-histidine from 5-phospho-alpha-D-ribose 1-diphosphate: step 6/9. This is Imidazoleglycerol-phosphate dehydratase from Bradyrhizobium sp. (strain ORS 278).